Reading from the N-terminus, the 207-residue chain is uncharacterized protein (207 aa).

The protein belongs to the methyltransferase superfamily.

This is an uncharacterized protein from Escherichia coli (strain K12).